The sequence spans 406 residues: Probable UDP-arabinose 4-epimerase 3 (406 aa).

The Cytoplasmic portion of the chain corresponds to 1-26 (MIPLNRRASQTRGGMEYFDARRKPHN). The helical; Signal-anchor for type II membrane protein transmembrane segment at 27-44 (VGKVIAALVLTTLCIFIL) threads the bilayer. Over 45–406 (KQSPGFGGSS…KSHPRGYGSN (362 aa)) the chain is Lumenal. 65-96 (HVLVTGGAGYIGSHASLRLLKDNYRVTIVDNL) is an NAD(+) binding site. The active-site Proton acceptor is Y213.

Belongs to the NAD(P)-dependent epimerase/dehydratase family. NAD(+) is required as a cofactor.

The protein localises to the golgi apparatus. It localises to the golgi stack membrane. It catalyses the reaction UDP-beta-L-arabinopyranose = UDP-alpha-D-xylose. Its pathway is nucleotide-sugar biosynthesis; UDP-L-arabinose biosynthesis; UDP-L-arabinose from UDP-alpha-D-xylose: step 1/1. It functions in the pathway cell wall biogenesis; cell wall polysaccharide biosynthesis. This Oryza sativa subsp. japonica (Rice) protein is Probable UDP-arabinose 4-epimerase 3 (UEL-3).